The chain runs to 85 residues: CRISPR-associated endoribonuclease Cas2 (85 aa).

Aspartate 8 contributes to the Mg(2+) binding site.

It belongs to the CRISPR-associated endoribonuclease Cas2 protein family. In terms of assembly, homodimer, forms a heterotetramer with a Cas1 homodimer. The cofactor is Mg(2+).

CRISPR (clustered regularly interspaced short palindromic repeat), is an adaptive immune system that provides protection against mobile genetic elements (viruses, transposable elements and conjugative plasmids). CRISPR clusters contain sequences complementary to antecedent mobile elements and target invading nucleic acids. CRISPR clusters are transcribed and processed into CRISPR RNA (crRNA). Functions as a ssRNA-specific endoribonuclease. Involved in the integration of spacer DNA into the CRISPR cassette. This chain is CRISPR-associated endoribonuclease Cas2, found in Thermococcus kodakarensis (strain ATCC BAA-918 / JCM 12380 / KOD1) (Pyrococcus kodakaraensis (strain KOD1)).